The following is a 420-amino-acid chain: Putative transporter AmpG 3 (420 aa).

Helical transmembrane passes span 6–26 (YLIGILLLGLISGLTFNLIFF), 41–61 (IVGSISLAAFPYCLKVIWSPF), 79–99 (GWALVSQIFLILTMMWFLKRS), 104–124 (LCITAIILFIIAFCSSTQDIV), 141–161 (IAFTFSSIGFRLGMLLGSVGA), 166–186 (IIFGWNTVYKFALFITMVGPI), 230–250 (LLLIILFVFLYKAADSIPMAM), 274–294 (LLIMIVGGTLGGILAAKIGIF), 297–317 (VLIGGVIQLLSPIMFMILATI), 324–344 (FIITITIQNFCSGFAGTIISI), 359–381 (YSISSSFSSLSRIILASLGGICA), and 386–406 (WPVFFLCNTLFSMLFIPIFYI).

This sequence belongs to the major facilitator superfamily.

It is found in the cell inner membrane. This Rickettsia typhi (strain ATCC VR-144 / Wilmington) protein is Putative transporter AmpG 3 (ampG3).